The primary structure comprises 174 residues: MLPRVALTTMSWMLLSSLMLLSQVQGEDAKEDVPTSRISCPKGSRAYGSYCYALFSVSKSWFDADLACQKRPSGHLVSVLSGSEASFVSSLIKSSGNSGQNVWIGLHDPTLGQEPNRGGWEWSNADVMNYFNWETNPSSVSGSHCGTLTRASGFLRWRENNCISELPYVCKFKA.

A signal peptide spans 1–26 (MLPRVALTTMSWMLLSSLMLLSQVQG). The propeptide occupies 27–37 (EDAKEDVPTSR). 3 disulfides stabilise this stretch: Cys-40/Cys-51, Cys-68/Cys-170, and Cys-145/Cys-162. The C-type lectin domain maps to 47-171 (YGSYCYALFS…CISELPYVCK (125 aa)). The interval 103 to 118 (WIGLHDPTLGQEPNRG) is sufficient to activate EXTL3. His-107 contacts Zn(2+). The short motif at 114–116 (EPN) is the EPN element. Zn(2+)-binding residues include Glu-121 and His-144.

Forms a hexameric membrane-permeabilizing oligomeric pore on membrane phospholipids. The hexamer is formed by three dimers related by helical symmetry. Forms filaments, filamentation traps pore complexes and limits damage to host cells. Interacts with EXTL3. In terms of processing, proteolytic processing by trypsin removes an inhibitory N-terminal propeptide and is essential for peptidoglycan binding and antibacterial activity. As to expression, expressed in injured skeletal muscles and sciatic nerve (at protein level). Expressed in the pancreas. Expression increases during the acute phase of pancreatitis.

It localises to the secreted. The protein localises to the cytoplasm. Lipopolysaccharide inhibits pore-forming activity, explaining why is bactericidal for Gram-positive but not Gram-negative bacteria. Functionally, bactericidal C-type lectin which acts exclusively against Gram-positive bacteria and mediates bacterial killing by binding to surface-exposed carbohydrate moieties of peptidoglycan. Restricts bacterial colonization of the intestinal epithelial surface and consequently limits activation of adaptive immune responses by the microbiota. In terms of biological role, acts as a hormone in response to different stimuli like anti-inflammatory signals, such as IL17A, or gut microbiome. Is secreted by different cell types to activate its receptor EXTL3 and induce cell specific signaling pathways. Induced by IL17A in keratinocytes, regulates keratinocyte proliferation and differentiation after skin injury. In parallel, inhibits skin inflammation through the inhibition of inflammatory cytokines such as IL6 and TNF. Induced by IL22 in lung epithelial cells, inhibits cytokine production and regulates allergic airway inflammation. Induced in small intestine by inulin-enriched diet and Lactobacillus gasseri enriched microbiome, plays a role in the improvement of gut barrier function, the regulation of energy balance and glucose levels. Modulates microbiota composition in duodenal contents. Produced by nociceptor in response to endotoxins, prevents endotoxic death by targeting kynurenine pathway in microglia. Its function is as follows. Has bacteriostatic activity. Has bactericidal activity against L.monocytogenes and methicillin-resistant S.aureus. The sequence is that of Regenerating islet-derived protein 3-gamma from Rattus norvegicus (Rat).